The following is a 1490-amino-acid chain: MTTKRKLIGRLVPCRCFRGEEEIISVLDYSHCSLQQVPKEVFNFERTLEELYLDANQIEELPKQLFNCQALRKLSIPDNDLSSLPTSIASLVNLKELDISKNGVQEFPENIKCCKCLTIIEASVNPISKLPDGFTQLLNLTQLYLNDAFLEFLPANFGRLVKLRILELRENHLKTLPKSMHKLAQLERLDLGNNEFSELPEVLDQIQNLRELWMDNNALQVLPGSIGKLKMLVYLDMSKNRIETVDMDISGCEALEDLLLSSNMLQQLPDSIGLLKKLTTLKVDDNQLTMLPNTIGNLSLLEEFDCSCNELESLPPTIGYLHSLRTLAVDENFLPELPREIGSCKNVTVMSLRSNKLEFLPEEIGQMQRLRVLNLSDNRLKNLPFSFTKLKELAALWLSDNQSKALIPLQTEAHPETKQRVLTNYMFPQQPRGDEDFQSDSDSFNPTLWEEQRQQRMTVAFEFEDKKEDDESAGKVKALSCQAPWDRGQRGITLQPARLSGDCCTPWARCDQQIQDMPVPQSDPQLAWGCISGLQQERSMCAPLPVAAQSTTLPSLSGRQVEINLKRYPTPYPEDLKNMVKSVQNLVGKPSHGVRVENANPTANTEQTVKEKFEHKWPVAPKEITVEDSFVHPANEMRIGELHPSLAETPLYPPKLVLLGKDKKESTDESEVDKTHCLNNSVSSGTYSDYSPSQASSASSNTRVKVGSLQPTTKDAVHNSLWGNRIAPPFPQPLDAKPLLTQREAVPPGNLPQRPDRLPMSDAFPDNWTDGSHYDNTGFVSEEATGENANNNPLLSSKARSVPAHGRRPLIRQERIVGVPLELEQSTHRHTPETEVPPSNPWQNWTRTPSPFEDRTAFPSKLETTPTTSPLPERKDHMKEPTETPGPFSPGVPWEYHDPTPNRSLGNVFSQIHCRPDSSKGVIAISKSTERLSPLMKDIKSNKFKKSQSIDEIDVGTYKVYNIPLENYASGSDHLGSHERPDKFLGPEHGMSSMSRSQSVPMLDDEMLMYGSSKGPPQQKASMTKKVYQFDQSFNPQGAVEVKAEKRIPPPFAHNSEYVQQPGKNIAKDLVSPRAYRGYPPMEQMFSFSQPSVNEDAMVNAQFASQGPRAGFLRRADSLASSTEMAMFRRVSEPHELPPGDRYGRAAYRGGLEGQSSVSMTDPQFLKRNGRYEDEHPSYQEVKAQAGSFPAKNLTQRRPLSARSYSTESYGASQTRPVSARPTMAALLEKIPSDYNLGNYGDKTSDNSDIKTRPTPVKGEESCGKMPADWRQQLLRHIEARRLDRTPSQQSNILDNGQEDVSPSGQWNPYPLGRRDVPPDTITKKAGSHIQTLMGSQSLQHRSREQQPYEGNINKVTIQQFQSPLPIQIPSSQATRGPQPGRCLIQTKGQRSMDGYPEQFCVRIEKNPGLGFSISGGISGQGNPFKPSDKGIFVTRVQPDGPASNLLQPGDKILQANGHSFVHMEHEKAVLLLKSFQNTVDLVIQRELTV.

LRR repeat units follow at residues I23–F44, T47–C68, A70–L91, N93–C114, C116–L137, N139–V161, K162–L183, Q185–I206, N208–L229, M231–E253, A254–L275, K277–L298, L300–L321, S323–C344, N346–M367, R369–K391, and E392–A413. S439, S441, and S443 each carry phosphoserine. The segment covering K663–H676 has biased composition (basic and acidic residues). Disordered stretches follow at residues K663–L709, D775–R808, and E822–P899. Over residues C677–T686 the composition is skewed to polar residues. Residues Y687–S700 are compositionally biased toward low complexity. Polar residues predominate over residues E787–A799. Phosphothreonine is present on T831. S850 carries the phosphoserine modification. Residues P859–L871 show a composition bias toward low complexity. At T865 the chain carries Phosphothreonine. At S869 the chain carries Phosphoserine. The segment covering P872–T882 has biased composition (basic and acidic residues). Phosphoserine occurs at positions 947, 949, and 1118. Position 1149 is an omega-N-methylarginine (R1149). A compositionally biased stretch (polar residues) spans L1194–P1217. Positions L1194 to V1218 are disordered. Residue S1233 is modified to Phosphoserine. Disordered stretches follow at residues G1238–K1265 and R1282–L1312. Residues K1243–C1263 are compositionally biased toward basic and acidic residues. Polar residues predominate over residues T1286–W1307. A phosphoserine mark is found at S1288 and S1392. The 91-residue stretch at E1398–L1488 folds into the PDZ domain.

Belongs to the LAP (LRR and PDZ) protein family. In terms of assembly, interacts with CNKSR2 and DLG4. Interacts with CTNND2/Catenin delta-2. Forms a complex with N-cadherin through CTNND2. Interacts with CAMK2A. In terms of processing, O-glycosylated and phosphorylated. In terms of tissue distribution, brain-specific. Highly concentrated at synapses.

It localises to the cytoplasm. It is found in the postsynaptic density. In terms of biological role, required for normal synaptic spine architecture and function. Necessary for DISC1 and GRM5 localization to postsynaptic density complexes and for both N-methyl D-aspartate receptor-dependent and metabotropic glutamate receptor-dependent long term depression. In Rattus norvegicus (Rat), this protein is Leucine-rich repeat-containing protein 7 (Lrrc7).